We begin with the raw amino-acid sequence, 159 residues long: Cytochrome P450 monooxygenase aunB (159 aa).

Heme is bound at residue C134.

This sequence belongs to the cytochrome P450 family. It depends on heme as a cofactor.

The enzyme catalyses 2 fonsecin B + NADPH + O2 + H(+) = aurasperone B + NADP(+) + 2 H2O. It carries out the reaction 2 rubrofusarin B + NADPH + O2 + H(+) = aurasperone A + NADP(+) + 2 H2O. It participates in secondary metabolite biosynthesis. Functionally, cytochrome P450 monooxygenase; part of the gene cluster that mediates the biosynthesis of aurasperone B, a dimeric gamma-naphthopyrone. The first step in the biosynthesis of aurasperone B is the production of gamma-naphthopyrone precursor YWA1 by the non-reducing polyketide synthase albA, via condensation of one acetyl-CoA starter unit with 6 malonyl-CoA units. YWA1 is then methylated by aunE at position C-6 to yield foncesin which is further methylated at position C-8 by aunD to produce fonsecin B. A key enzyme in the biosynthetic pathway is the cytochrome P450 monooxygenase aunB which catalyzes the oxidative dimerization of fonsecin B to aurasperone B. AunB also catalyzes the oxidative dimerization of rubrofusarin B into aurasperone A. The sequence is that of Cytochrome P450 monooxygenase aunB from Aspergillus niger (strain ATCC 1015 / CBS 113.46 / FGSC A1144 / LSHB Ac4 / NCTC 3858a / NRRL 328 / USDA 3528.7).